Here is a 531-residue protein sequence, read N- to C-terminus: Putative aldehyde dehydrogenase family 7 member A1 homolog (531 aa).

264-269 (GSSEIG) is a binding site for NAD(+). Catalysis depends on glutamate 286, which acts as the Proton acceptor. Catalysis depends on cysteine 320, which acts as the Nucleophile.

Belongs to the aldehyde dehydrogenase family. As to quaternary structure, homotetramer.

The enzyme catalyses an aldehyde + NAD(+) + H2O = a carboxylate + NADH + 2 H(+). This Caenorhabditis elegans protein is Putative aldehyde dehydrogenase family 7 member A1 homolog (alh-9).